Here is a 42-residue protein sequence, read N- to C-terminus: MDSNFLKYLSTAPVLFTVWLSFTASFIIEANRFFPDMLYFPM.

Residues 8–28 traverse the membrane as a helical segment; sequence YLSTAPVLFTVWLSFTASFII.

Belongs to the PsaJ family.

Its subcellular location is the plastid. It localises to the chloroplast thylakoid membrane. Its function is as follows. May help in the organization of the PsaE and PsaF subunits. This chain is Photosystem I reaction center subunit IX, found in Rhodomonas salina (Cryptomonas salina).